Here is a 31-residue protein sequence, read N- to C-terminus: Kalata-B9 (31 aa).

The cyclopeptide (Gly-Asp) cross-link spans 1-31 (GSVFNCGETCVLGTCYTPGCTCNTYRVCTKD). 3 disulfide bridges follow: Cys6–Cys20, Cys10–Cys22, and Cys15–Cys28.

The protein belongs to the cyclotide family. Bracelet subfamily. In terms of processing, this peptide occurs in both cyclic and linear forms.

In terms of biological role, probably participates in a plant defense mechanism. This Oldenlandia affinis protein is Kalata-B9.